A 362-amino-acid polypeptide reads, in one-letter code: Aminomethyltransferase (362 aa).

It belongs to the GcvT family. As to quaternary structure, the glycine cleavage system is composed of four proteins: P, T, L and H.

It carries out the reaction N(6)-[(R)-S(8)-aminomethyldihydrolipoyl]-L-lysyl-[protein] + (6S)-5,6,7,8-tetrahydrofolate = N(6)-[(R)-dihydrolipoyl]-L-lysyl-[protein] + (6R)-5,10-methylene-5,6,7,8-tetrahydrofolate + NH4(+). In terms of biological role, the glycine cleavage system catalyzes the degradation of glycine. This is Aminomethyltransferase from Listeria innocua serovar 6a (strain ATCC BAA-680 / CLIP 11262).